Reading from the N-terminus, the 293-residue chain is tRNA pseudouridine synthase B (293 aa).

The active-site Nucleophile is aspartate 39.

The protein belongs to the pseudouridine synthase TruB family. Type 1 subfamily.

The enzyme catalyses uridine(55) in tRNA = pseudouridine(55) in tRNA. Functionally, responsible for synthesis of pseudouridine from uracil-55 in the psi GC loop of transfer RNAs. The chain is tRNA pseudouridine synthase B from Rickettsia bellii (strain RML369-C).